Here is a 1292-residue protein sequence, read N- to C-terminus: Putative late blight resistance protein homolog R1C-3 (1292 aa).

2 coiled-coil regions span residues 394–414 and 505–526; these read DSLAFLKNQLQVIQTKFESMQ and RMNEEIVGFEDVIETLRKKLLN. One can recognise an NB-ARC domain in the interval 505–792; sequence RMNEEIVGFE…SESFVKSCEG (288 aa). 538 to 545 is a binding site for ATP; it reads GMPGLGKT. LRR repeat units lie at residues 842–865, 920–944, 963–991, 1066–1089, 1094–1113, 1114–1142, and 1163–1187; these read AEENFLLWINRDQITKPSSCVYSH, FKFLKVLDLEHQVVIDSIPTELFYL, LWNLETLILNRTSAATGKTLLLPSTVWDM, PIRLEMLKLHQSNIFNPISFCISA, YLELSGFYLDSQYLSETADH, LKHLEVLKLYYVEFGDHREWKVSNGMFPQ, and FPNLEQLVLRGCRHLMEIPSCFMDI. The HMA domain occupies 1211-1278; the sequence is ETQVEDNQNT…KLRNVAYADE (68 aa).

Belongs to the disease resistance NB-LRR family.

It is found in the cytoplasm. It localises to the membrane. Confers resistance to late blight (Phytophthora infestans) races carrying the avirulence gene Avr1. Resistance proteins guard the plant against pathogens that contain an appropriate avirulence protein via an indirect interaction with this avirulence protein. That triggers a defense system including the hypersensitive response, which restricts the pathogen growth. The sequence is that of Putative late blight resistance protein homolog R1C-3 (R1C-3) from Solanum demissum (Wild potato).